Here is a 281-residue protein sequence, read N- to C-terminus: AT-hook motif nuclear-localized protein 20 (281 aa).

2 disordered regions span residues 43–85 and 216–247; these read MNQS…APIF and MEEEEDGGGSRQIHGGGDSPPRIGSNLPDLSG. A DNA-binding region (a.T hook) is located at residues 67–79; it reads RRPRGRPPGSKNK. The 139-residue stretch at 91–229 folds into the PPC domain; that stretch reads PNALRSHVLE…EDGGGSRQIH (139 aa).

The protein localises to the nucleus. Functionally, transcription factor that specifically binds AT-rich DNA sequences related to the nuclear matrix attachment regions (MARs). Negatively regulates plant innate immunity (PTI) to pathogens through the down-regulation of the PAMP-triggered NHO1 and FRK1 expression. The protein is AT-hook motif nuclear-localized protein 20 of Arabidopsis thaliana (Mouse-ear cress).